The chain runs to 343 residues: Apolipoprotein L6 (343 aa).

A compositionally biased stretch (basic and acidic residues) spans 1-10 (MDNQAERESE). The tract at residues 1–24 (MDNQAERESEAGVGLQRDEDDAPL) is disordered.

This sequence belongs to the apolipoprotein L family. In terms of tissue distribution, widely expressed; highly expressed in the uterus, fetal brain and spinal cord, also detected in heart, liver, lung, colon, spleen, thymus, prostate, placenta, adrenal gland, salivary and mammary gland.

The protein localises to the cytoplasm. Functionally, may affect the movement of lipids in the cytoplasm or allow the binding of lipids to organelles. The protein is Apolipoprotein L6 (APOL6) of Homo sapiens (Human).